Reading from the N-terminus, the 1579-residue chain is DNA-directed RNA polymerase subunit beta' (1579 aa).

Residues cysteine 65, cysteine 67, cysteine 80, and cysteine 83 each contribute to the Zn(2+) site. Aspartate 601, aspartate 603, and aspartate 605 together coordinate Mg(2+). Residues cysteine 938, cysteine 1012, cysteine 1019, and cysteine 1022 each contribute to the Zn(2+) site.

Belongs to the RNA polymerase beta' chain family. The RNAP catalytic core consists of 2 alpha, 1 beta, 1 beta' and 1 omega subunit. When a sigma factor is associated with the core the holoenzyme is formed, which can initiate transcription. Mg(2+) is required as a cofactor. Zn(2+) serves as cofactor.

It catalyses the reaction RNA(n) + a ribonucleoside 5'-triphosphate = RNA(n+1) + diphosphate. Its function is as follows. DNA-dependent RNA polymerase catalyzes the transcription of DNA into RNA using the four ribonucleoside triphosphates as substrates. The sequence is that of DNA-directed RNA polymerase subunit beta' from Sulfurihydrogenibium sp. (strain YO3AOP1).